We begin with the raw amino-acid sequence, 670 residues long: MADLSQQSKARVEALRREINHHNYQYYVLDQPTITDAQYDQLMQELLRLEERHPELVTPDSPTQRVGGQVQRGFSSVPHKIPMLSLGNAFGEGDLREFDRRVRSYLPGEEVKYVVELKIDGLAISLWYEKGLLVRGATRGDGELGEDITINLKTIRAIPLRLTQEVPFLEVRGEAYMPKDSFVRLNEAREEAGEPLFANPRNAAAGSLRQLDPKITAARNLSVFMYAIGYIEGAKPPSHAESLAWLKELGIRINPDHQVCGSIDEVIDFISQWQAKRYQLPYAIDGMVIKVNSLEQQQRLGTTMKSPRWAIAYKFPAEQAVSTIKDIIIRVGRTGVLTPTAILEPVQLAGTTVSKATLHNEDIIRQKDIRIGDKALVQKAGDIIPEIVQVYPEKRTGNEVPFILPVTCPECGAEVVRVAGEAAHRCTNENCSAKSREGIIHFVSRSAMDIMGLGEGIVNQLIKGGLVKDPADLYDLKYEDLIRQERMGARSSQKLLAAIEASKNNSLGQLLFGLGIRHVGERAAKILARQFGSMQALMQATAEDLTGISEIGPRIAESIMEYFSRQENQGLIERLSKAGVNMLEEVEQTESTDQTLSGKTFVVTGTLEGFSRQEAQRAIEERGGKVSGSVSKKTNYVVVGENPGSKHDKARQLGITILTEQDFVKLLQQQ.

NAD(+) is bound by residues 36–40 (DAQYD), 85–86 (SL), and E116. K118 serves as the catalytic N6-AMP-lysine intermediate. 4 residues coordinate NAD(+): R139, E174, K290, and K314. The Zn(2+) site is built by C408, C411, C426, and C431. A BRCT domain is found at 591–670 (STDQTLSGKT…QDFVKLLQQQ (80 aa)).

It belongs to the NAD-dependent DNA ligase family. LigA subfamily. It depends on Mg(2+) as a cofactor. The cofactor is Mn(2+).

The catalysed reaction is NAD(+) + (deoxyribonucleotide)n-3'-hydroxyl + 5'-phospho-(deoxyribonucleotide)m = (deoxyribonucleotide)n+m + AMP + beta-nicotinamide D-nucleotide.. DNA ligase that catalyzes the formation of phosphodiester linkages between 5'-phosphoryl and 3'-hydroxyl groups in double-stranded DNA using NAD as a coenzyme and as the energy source for the reaction. It is essential for DNA replication and repair of damaged DNA. This chain is DNA ligase, found in Desulforamulus reducens (strain ATCC BAA-1160 / DSM 100696 / MI-1) (Desulfotomaculum reducens).